We begin with the raw amino-acid sequence, 483 residues long: Homoserine O-acetyltransferase (483 aa).

Residues N47–E346 form the AB hydrolase-1 domain. Catalysis depends on S152, which acts as the Nucleophile. R221 is a substrate binding site. Residues D307 and H340 contribute to the active site. D341 is a substrate binding site. CBS domains are found at residues M367–S423 and L428–K483.

The protein belongs to the AB hydrolase superfamily. MetX family. Homodimer.

Its subcellular location is the cytoplasm. It carries out the reaction L-homoserine + acetyl-CoA = O-acetyl-L-homoserine + CoA. Its pathway is amino-acid biosynthesis; L-methionine biosynthesis via de novo pathway; O-acetyl-L-homoserine from L-homoserine: step 1/1. In terms of biological role, transfers an acetyl group from acetyl-CoA to L-homoserine, forming acetyl-L-homoserine. This is Homoserine O-acetyltransferase from Methanohalophilus mahii (strain ATCC 35705 / DSM 5219 / SLP).